We begin with the raw amino-acid sequence, 106 residues long: U1-lycotoxin-Ls1b (106 aa).

The N-terminal stretch at 1 to 19 (MKVLVVVALLVTLISYSSS) is a signal peptide. The propeptide occupies 20–40 (EGIDDLEADELLSLMANEQTR). 4 disulfide bridges follow: cysteine 43–cysteine 58, cysteine 50–cysteine 67, cysteine 57–cysteine 85, and cysteine 69–cysteine 83.

The protein belongs to the neurotoxin 19 (CSTX) family. 04 (U1-Lctx) subfamily. As to expression, expressed by the venom gland.

Its subcellular location is the secreted. The chain is U1-lycotoxin-Ls1b from Lycosa singoriensis (Wolf spider).